The following is a 327-amino-acid chain: MEAIKGADVNVPDAVFAWILDRNGGVKPLTDNDVIDSEHPCWLHLNYTHPESAQWLATTPLLPNNVRDALAGESTRPRVNRMGEGTLITLRCINGSTDERPDQLVAMRVYMDERLIVSTRQRKVLALDDVVSDLEEGTGPEDCGGWLVDVCDALTDHASEFIEQLHDKIIDLEDNLLDQQIPPRGFLALLRKQLIVMRRYMAPQRDVYARLSSERLPWMNDDQRRRMQDIADRLGRGLDEIDACIARTGVMADEIAQVMQENLARRTYTMSLMAMVFLPSTFLTGLFGVNLGGIPGGGWRFGFSLFCILLVVLIGGVALWLHRSKWL.

Residues 1-273 (MEAIKGADVN…ARRTYTMSLM (273 aa)) lie on the Cytoplasmic side of the membrane. A helical membrane pass occupies residues 274–294 (AMVFLPSTFLTGLFGVNLGGI). At 295 to 300 (PGGGWR) the chain is on the periplasmic side. A helical transmembrane segment spans residues 301 to 321 (FGFSLFCILLVVLIGGVALWL). Residues 322–327 (HRSKWL) lie on the Cytoplasmic side of the membrane.

This sequence belongs to the CorA metal ion transporter (MIT) (TC 1.A.35) family.

The protein resides in the cell inner membrane. It carries out the reaction Zn(2+)(out) + H(+)(out) = Zn(2+)(in) + H(+)(in). In terms of biological role, zinc transporter. Acts as a Zn(2+):proton symporter, which likely mediates zinc ion uptake. This Escherichia fergusonii (strain ATCC 35469 / DSM 13698 / CCUG 18766 / IAM 14443 / JCM 21226 / LMG 7866 / NBRC 102419 / NCTC 12128 / CDC 0568-73) protein is Zinc transport protein ZntB.